We begin with the raw amino-acid sequence, 467 residues long: Probable serine hydroxymethyltransferase, cytosolic (467 aa).

Position 243 is an N6-(pyridoxal phosphate)lysine (K243).

It belongs to the SHMT family. As to quaternary structure, homotetramer. Requires pyridoxal 5'-phosphate as cofactor.

It is found in the cytoplasm. It catalyses the reaction (6R)-5,10-methylene-5,6,7,8-tetrahydrofolate + glycine + H2O = (6S)-5,6,7,8-tetrahydrofolate + L-serine. It functions in the pathway one-carbon metabolism; tetrahydrofolate interconversion. Functionally, interconversion of serine and glycine. The polypeptide is Probable serine hydroxymethyltransferase, cytosolic (Schizosaccharomyces pombe (strain 972 / ATCC 24843) (Fission yeast)).